The chain runs to 429 residues: UDP-N-acetylglucosamine 1-carboxyvinyltransferase (429 aa).

22-23 (KN) is a binding site for phosphoenolpyruvate. Arginine 102 provides a ligand contact to UDP-N-acetyl-alpha-D-glucosamine. Cysteine 126 functions as the Proton donor in the catalytic mechanism. Cysteine 126 bears the 2-(S-cysteinyl)pyruvic acid O-phosphothioketal mark. UDP-N-acetyl-alpha-D-glucosamine contacts are provided by residues 131-135 (RPVDL), 171-174 (KVSV), aspartate 316, and isoleucine 338.

It belongs to the EPSP synthase family. MurA subfamily.

The protein resides in the cytoplasm. It catalyses the reaction phosphoenolpyruvate + UDP-N-acetyl-alpha-D-glucosamine = UDP-N-acetyl-3-O-(1-carboxyvinyl)-alpha-D-glucosamine + phosphate. Its pathway is cell wall biogenesis; peptidoglycan biosynthesis. Its function is as follows. Cell wall formation. Adds enolpyruvyl to UDP-N-acetylglucosamine. The protein is UDP-N-acetylglucosamine 1-carboxyvinyltransferase of Brucella abortus (strain S19).